We begin with the raw amino-acid sequence, 199 residues long: Glycerol-3-phosphate acyltransferase (199 aa).

A run of 5 helical transmembrane segments spans residues 4–24 (FALFYMLFAYLLGSISSAILI), 56–76 (LAVLIFDMLKGMIPVWAGYYL), 80–100 (QFELGMVALGACLGHIFPIFF), 115–135 (IAPISWAVAGSMFGTWIFVFL), and 154–176 (YVWWFKPEFTFPVALVCCLLIYR).

It belongs to the PlsY family. As to quaternary structure, probably interacts with PlsX.

The protein localises to the cell inner membrane. The catalysed reaction is an acyl phosphate + sn-glycerol 3-phosphate = a 1-acyl-sn-glycero-3-phosphate + phosphate. It participates in lipid metabolism; phospholipid metabolism. Catalyzes the transfer of an acyl group from acyl-phosphate (acyl-PO(4)) to glycerol-3-phosphate (G3P) to form lysophosphatidic acid (LPA). This enzyme utilizes acyl-phosphate as fatty acyl donor, but not acyl-CoA or acyl-ACP. The chain is Glycerol-3-phosphate acyltransferase from Haemophilus influenzae (strain PittGG).